Reading from the N-terminus, the 252-residue chain is Large ribosomal subunit protein uL3 (252 aa).

The residue at position 169 (glutamine 169) is an N5-methylglutamine.

It belongs to the universal ribosomal protein uL3 family. Part of the 50S ribosomal subunit. Forms a cluster with proteins L14 and L19. Methylated by PrmB.

In terms of biological role, one of the primary rRNA binding proteins, it binds directly near the 3'-end of the 23S rRNA, where it nucleates assembly of the 50S subunit. The protein is Large ribosomal subunit protein uL3 of Hyphomonas neptunium (strain ATCC 15444).